The following is a 274-amino-acid chain: NAD kinase (274 aa).

Catalysis depends on Asp-50, which acts as the Proton acceptor. NAD(+) contacts are provided by residues 50-51, 126-127, Arg-152, Asp-154, 165-170, and Ala-189; these read DG, NE, and TAYNKS.

This sequence belongs to the NAD kinase family. Requires a divalent metal cation as cofactor.

The protein localises to the cytoplasm. The catalysed reaction is NAD(+) + ATP = ADP + NADP(+) + H(+). Its function is as follows. Involved in the regulation of the intracellular balance of NAD and NADP, and is a key enzyme in the biosynthesis of NADP. Catalyzes specifically the phosphorylation on 2'-hydroxyl of the adenosine moiety of NAD to yield NADP. This is NAD kinase from Streptococcus gordonii (strain Challis / ATCC 35105 / BCRC 15272 / CH1 / DL1 / V288).